A 158-amino-acid chain; its full sequence is Transcription elongation factor GreA (158 aa).

It belongs to the GreA/GreB family.

In terms of biological role, necessary for efficient RNA polymerase transcription elongation past template-encoded arresting sites. The arresting sites in DNA have the property of trapping a certain fraction of elongating RNA polymerases that pass through, resulting in locked ternary complexes. Cleavage of the nascent transcript by cleavage factors such as GreA or GreB allows the resumption of elongation from the new 3'terminus. GreA releases sequences of 2 to 3 nucleotides. The protein is Transcription elongation factor GreA of Polaromonas naphthalenivorans (strain CJ2).